The primary structure comprises 192 residues: Ras-like protein RAS2 (192 aa).

15–22 (GGGGVGKS) provides a ligand contact to GTP. The short motif at 37-45 (YDPTIEDSY) is the Effector region element. GTP is bound by residues 62–66 (DTAGQ) and 121–124 (NKSD). C189 carries the cysteine methyl ester modification. C189 carries the S-geranylgeranyl cysteine lipid modification. Residues 190–192 (IVL) constitute a propeptide, removed in mature form.

Belongs to the small GTPase superfamily. Ras family.

Its subcellular location is the cell membrane. The enzyme catalyses GTP + H2O = GDP + phosphate + H(+). Its activity is regulated as follows. Alternates between an inactive form bound to GDP and an active form bound to GTP. Activated by a guanine nucleotide-exchange factor (GEF) and inactivated by a GTPase-activating protein (GAP). Ras proteins bind GDP/GTP and possess intrinsic GTPase activity. The protein is Ras-like protein RAS2 (RAS2) of Hydra vulgaris (Hydra).